A 138-amino-acid chain; its full sequence is Growth factor (138 aa).

The signal sequence occupies residues 1-19; sequence MSMKYLMLLFAAMIIRSFA. An N-linked (GlcNAc...) asparagine; by host glycan is attached at asparagine 34. The EGF-like domain occupies 41-81; the sequence is AIRLCGPEGDGYCLHGDCIHARDIDGMYCRCSHGYTGIRCQ. Cystine bridges form between cysteine 45–cysteine 58, cysteine 53–cysteine 69, and cysteine 71–cysteine 80. N-linked (GlcNAc...) asparagine; by host glycosylation is present at asparagine 95.

The protein belongs to the orthopoxvirus OPG019 family.

It is found in the secreted. In terms of biological role, stimulates cellular proliferation (hyperplasia)and mobility around infected cells to promote rapid and efficient spread of infection. The sequence is that of Growth factor (OPG019) from Rabbitpox virus (strain Utrecht) (RPV).